The chain runs to 954 residues: Protein teashirt (954 aa).

3 disordered regions span residues 20–91, 167–207, and 276–331; these read LPTA…SLPS, ESAE…PQLG, and VKGG…GSGA. Positions 47-57 are enriched in gly residues; the sequence is HGGGAGSGGVG. The span at 292-303 shows a compositional bias: polar residues; sequence SKATTPQAASQP. Gly residues predominate over residues 318-328; the sequence is SGGGSGGGAAG. The C2H2-type 1 zinc finger occupies 354–378; that stretch reads FRCVWCKQSFPTLEALTTHMKDSKH. Residues 383–444 are disordered; the sequence is VPPFGNLPSN…YRGDPPTPLP (62 aa). Positions 417 to 428 are enriched in low complexity; that stretch reads SGSASNHSPSAN. 2 C2H2-type zinc fingers span residues 466 to 490 and 533 to 557; these read LKCMRCGESFRSLGEMTKHMQETQH and LTCKVCDKAFNSLGDLSNHMAKNNH. 3 disordered regions span residues 563–622, 689–714, and 748–935; these read LQSA…DKND, FDTPPRHASLPASSPSNSSTKNTSPV, and TSSE…NLTA. Basic residues predominate over residues 568-578; the sequence is ARKRPAPKKRE. Over residues 579-588 the composition is skewed to basic and acidic residues; that stretch reads KSLPVRKLLE. Residues 696–712 show a composition bias toward low complexity; the sequence is ASLPASSPSNSSTKNTS. A phosphoserine mark is found at Ser750 and Ser758. Positions 778–807 are enriched in basic and acidic residues; sequence GHDEESSKPAIKQEREAESKPVKMEIKSEF. Low complexity predominate over residues 842–851; sequence PKTPSSAASP. 2 stretches are compositionally biased toward polar residues: residues 862–885 and 893–907; these read AESQRSVTPKSPASSHKSYDGSSE and DSLNALSSMFDSLGS. Positions 910–926 are enriched in low complexity; that stretch reads AGANSRAKLAAAAAAGG.

The protein belongs to the teashirt C2H2-type zinc-finger protein family. Binds arm. As to expression, shows a dynamic expression pattern during embryogenesis. Expressed in the embryonic trunk region (PS 3-13) with expression strongest in the thoracic segments. Expressed in a small group of cells corresponding to the anal tuft from stage 14. Strongly expressed in the embryonic ventral nerve cord. Also expressed in the proximal domain of the leg imaginal disk and in the region of the wing disk that will give rise to the proximal wing hinge. Expressed at high levels in the anterior and central embryonic midgut mesoderm and in the embryonic midgut endoderm. Expressed at a low level in more posterior visceral mesoderm of the gut. From stage 12 onwards, tsh and tio are colocalized in some cells of the CNS, trunk epidermis, hindgut and Malpighian tubules.

The protein localises to the nucleus. Its subcellular location is the cytoplasm. Its function is as follows. Homeotic protein that acts downstream of Arm in the Wg cascade during embryogenesis to determine segment identity throughout the entire trunk. Acts cooperatively with other trunk homeotic proteins to repress head homeotic genes and therefore repress head segmental identity. Necessary, in combination with Scr, for the formation of the prothoracic segment. Promotes eye development in the dorsal region of the eye disk and suppresses eye development in the ventral region in combination with Wg-signaling and several early dorso-ventral eye patterning genes. Required for proper development of proximal leg segments. Has differential functions along the dorso-ventral axs of the antennal and leg disks. May play a role in wing hinge development. Possible involvement in chromatin structure for modulation of transcription. Binds DNA and can act as both a transcriptional repressor and activator. Positively regulates its own expression as well as that of Dll. Negatively regulates the expression of mod. Required for Wg-mediated transcriptional repression of Ubx in the midgut. Also represses transcription of lab in the midgut and is necessary for the proper formation of anterior and central midgut structures. Tiptop (tio) and teashirt (tsh) have, on the whole, common activities. Tio and tsh repress each other's expression and tsh has a crucial role for trunk patterning that is in part masked by ectopic expression of tiptop. Both genes share a common activity required for the activation of Ser and svb and the maintenance of en and wg. The protein is Protein teashirt (tsh) of Drosophila melanogaster (Fruit fly).